The primary structure comprises 321 residues: Type 3 secretion system translocon protein SctB (321 aa).

The helical transmembrane segment at Ala99–Ile119 threads the bilayer.

This sequence belongs to the SctB/EspB family. In terms of assembly, the core secretion machinery of the T3SS is composed of approximately 20 different proteins, including cytoplasmic components, a base, an export apparatus and a needle. This subunit is involved in the formation of a pore, called the translocon, in host membrane.

Its subcellular location is the secreted. It is found in the cell surface. The protein resides in the host membrane. Functionally, component of the type III secretion system (T3SS), also called injectisome, which is used to inject bacterial effector proteins into eukaryotic host cells. EspD and EspB are inserted into the host membrane where they form a pore and allow the translocation of effector proteins into the cytosol of target cells. Necessary for intimate attachment to epithelial cells. This is Type 3 secretion system translocon protein SctB from Escherichia coli O127:H6 (strain E2348/69 / EPEC).